A 672-amino-acid polypeptide reads, in one-letter code: UvrABC system protein B (672 aa).

Residues 26-181 enclose the Helicase ATP-binding domain; sequence AGLEDGLAYQ…ILQRLAELQY (156 aa). Residue 39–46 participates in ATP binding; it reads GVTGSGKT. Positions 92 to 115 match the Beta-hairpin motif; that stretch reads YYDYYQPEAYVPSSDTYIEKDASI. The Helicase C-terminal domain occupies 430–592; sequence QVDDLLSEIK…ITPKSIQKAV (163 aa). The UVR domain maps to 631-666; it reads AKELRKLEEQMYHHARNLEFEEAAAVRDKIQHIRKG.

Belongs to the UvrB family. As to quaternary structure, forms a heterotetramer with UvrA during the search for lesions. Interacts with UvrC in an incision complex.

It is found in the cytoplasm. Functionally, the UvrABC repair system catalyzes the recognition and processing of DNA lesions. A damage recognition complex composed of 2 UvrA and 2 UvrB subunits scans DNA for abnormalities. Upon binding of the UvrA(2)B(2) complex to a putative damaged site, the DNA wraps around one UvrB monomer. DNA wrap is dependent on ATP binding by UvrB and probably causes local melting of the DNA helix, facilitating insertion of UvrB beta-hairpin between the DNA strands. Then UvrB probes one DNA strand for the presence of a lesion. If a lesion is found the UvrA subunits dissociate and the UvrB-DNA preincision complex is formed. This complex is subsequently bound by UvrC and the second UvrB is released. If no lesion is found, the DNA wraps around the other UvrB subunit that will check the other stand for damage. The polypeptide is UvrABC system protein B (Coxiella burnetii (strain CbuK_Q154) (Coxiella burnetii (strain Q154))).